The chain runs to 71 residues: Translation initiation factor IF-1 (71 aa).

Residues 1-71 (MSKDDLIQFT…LTKGRVIHRH (71 aa)) form the S1-like domain.

The protein belongs to the IF-1 family. In terms of assembly, component of the 30S ribosomal translation pre-initiation complex which assembles on the 30S ribosome in the order IF-2 and IF-3, IF-1 and N-formylmethionyl-tRNA(fMet); mRNA recruitment can occur at any time during PIC assembly.

It localises to the cytoplasm. One of the essential components for the initiation of protein synthesis. Stabilizes the binding of IF-2 and IF-3 on the 30S subunit to which N-formylmethionyl-tRNA(fMet) subsequently binds. Helps modulate mRNA selection, yielding the 30S pre-initiation complex (PIC). Upon addition of the 50S ribosomal subunit IF-1, IF-2 and IF-3 are released leaving the mature 70S translation initiation complex. The chain is Translation initiation factor IF-1 from Rickettsia canadensis (strain McKiel).